A 260-amino-acid polypeptide reads, in one-letter code: Dehydrogenase/reductase SDR family member 4 (260 aa).

14-38 (IVTAATKGIGLAIAERLLDEGASVV) is a binding site for NADP(+). Serine 148 lines the substrate pocket. Tyrosine 161 functions as the Proton acceptor in the catalytic mechanism. Lysine 165 contributes to the NADP(+) binding site.

The protein belongs to the short-chain dehydrogenases/reductases (SDR) family.

The enzyme catalyses a secondary alcohol + NADP(+) = a ketone + NADPH + H(+). Functionally, catalyzes the reduction of isatin, 4-oxonon-2-enal, 9,10-phenanthrenequinone, menadione, 2,3-hexaenadione, 3,4-hexanedione and 2,3-heptanedione. This is Dehydrogenase/reductase SDR family member 4 from Caenorhabditis elegans.